A 131-amino-acid chain; its full sequence is Mediator of RNA polymerase II transcription subunit 31 (131 aa).

Ala-2 carries the N-acetylalanine modification.

The protein belongs to the Mediator complex subunit 31 family. As to quaternary structure, component of the Mediator complex, which is composed of MED1, MED4, MED6, MED7, MED8, MED9, MED10, MED11, MED12, MED13, MED13L, MED14, MED15, MED16, MED17, MED18, MED19, MED20, MED21, MED22, MED23, MED24, MED25, MED26, MED27, MED29, MED30, MED31, CCNC, CDK8 and CDC2L6/CDK11. The MED12, MED13, CCNC and CDK8 subunits form a distinct module termed the CDK8 module. Mediator containing the CDK8 module is less active than Mediator lacking this module in supporting transcriptional activation. Individual preparations of the Mediator complex lacking one or more distinct subunits have been variously termed ARC, CRSP, DRIP, PC2, SMCC and TRAP.

It is found in the nucleus. In terms of biological role, component of the Mediator complex, a coactivator involved in the regulated transcription of nearly all RNA polymerase II-dependent genes. Mediator functions as a bridge to convey information from gene-specific regulatory proteins to the basal RNA polymerase II transcription machinery. Mediator is recruited to promoters by direct interactions with regulatory proteins and serves as a scaffold for the assembly of a functional preinitiation complex with RNA polymerase II and the general transcription factors. In Homo sapiens (Human), this protein is Mediator of RNA polymerase II transcription subunit 31 (MED31).